Consider the following 393-residue polypeptide: S-adenosylmethionine synthase (393 aa).

His16 contacts ATP. Asp18 serves as a coordination point for Mg(2+). Glu44 serves as a coordination point for K(+). Residues Glu57 and Gln100 each contribute to the L-methionine site. Positions Gln100–His110 are flexible loop. Residues Asp167–Lys169, Arg238–Phe239, Asp247, Arg253–Lys254, Ala270, and Lys274 contribute to the ATP site. An L-methionine-binding site is contributed by Asp247. Lys278 serves as a coordination point for L-methionine.

This sequence belongs to the AdoMet synthase family. As to quaternary structure, homotetramer; dimer of dimers. Mg(2+) is required as a cofactor. K(+) serves as cofactor.

The protein localises to the cytoplasm. The enzyme catalyses L-methionine + ATP + H2O = S-adenosyl-L-methionine + phosphate + diphosphate. It participates in amino-acid biosynthesis; S-adenosyl-L-methionine biosynthesis; S-adenosyl-L-methionine from L-methionine: step 1/1. Catalyzes the formation of S-adenosylmethionine (AdoMet) from methionine and ATP. The overall synthetic reaction is composed of two sequential steps, AdoMet formation and the subsequent tripolyphosphate hydrolysis which occurs prior to release of AdoMet from the enzyme. The protein is S-adenosylmethionine synthase of Acidovorax ebreus (strain TPSY) (Diaphorobacter sp. (strain TPSY)).